The primary structure comprises 413 residues: Serine hydroxymethyltransferase (413 aa).

(6S)-5,6,7,8-tetrahydrofolate is bound by residues Leu-117 and 121-123 (GHL). Residue Lys-226 is modified to N6-(pyridoxal phosphate)lysine. 349–351 (SPF) is a binding site for (6S)-5,6,7,8-tetrahydrofolate.

Belongs to the SHMT family. In terms of assembly, homodimer. Requires pyridoxal 5'-phosphate as cofactor.

The protein localises to the cytoplasm. It carries out the reaction (6R)-5,10-methylene-5,6,7,8-tetrahydrofolate + glycine + H2O = (6S)-5,6,7,8-tetrahydrofolate + L-serine. Its pathway is one-carbon metabolism; tetrahydrofolate interconversion. The protein operates within amino-acid biosynthesis; glycine biosynthesis; glycine from L-serine: step 1/1. In terms of biological role, catalyzes the reversible interconversion of serine and glycine with tetrahydrofolate (THF) serving as the one-carbon carrier. This reaction serves as the major source of one-carbon groups required for the biosynthesis of purines, thymidylate, methionine, and other important biomolecules. Also exhibits THF-independent aldolase activity toward beta-hydroxyamino acids, producing glycine and aldehydes, via a retro-aldol mechanism. The sequence is that of Serine hydroxymethyltransferase from Listeria monocytogenes serotype 4b (strain F2365).